A 309-amino-acid polypeptide reads, in one-letter code: Aspartate carbamoyltransferase catalytic subunit (309 aa).

Residues R55 and T56 each coordinate carbamoyl phosphate. Residue K85 coordinates L-aspartate. Carbamoyl phosphate is bound by residues R106, H135, and Q138. Residues R168 and R230 each coordinate L-aspartate. Carbamoyl phosphate-binding residues include L268 and P269.

The protein belongs to the aspartate/ornithine carbamoyltransferase superfamily. ATCase family. As to quaternary structure, heterododecamer (2C3:3R2) of six catalytic PyrB chains organized as two trimers (C3), and six regulatory PyrI chains organized as three dimers (R2).

It catalyses the reaction carbamoyl phosphate + L-aspartate = N-carbamoyl-L-aspartate + phosphate + H(+). The protein operates within pyrimidine metabolism; UMP biosynthesis via de novo pathway; (S)-dihydroorotate from bicarbonate: step 2/3. Its function is as follows. Catalyzes the condensation of carbamoyl phosphate and aspartate to form carbamoyl aspartate and inorganic phosphate, the committed step in the de novo pyrimidine nucleotide biosynthesis pathway. The chain is Aspartate carbamoyltransferase catalytic subunit from Wigglesworthia glossinidia brevipalpis.